Here is a 162-residue protein sequence, read N- to C-terminus: Nucleotide-binding protein Mpe_A3039 (162 aa).

This sequence belongs to the YajQ family.

In terms of biological role, nucleotide-binding protein. The polypeptide is Nucleotide-binding protein Mpe_A3039 (Methylibium petroleiphilum (strain ATCC BAA-1232 / LMG 22953 / PM1)).